The chain runs to 249 residues: Probable transcriptional regulatory protein Minf_0651 (249 aa).

It belongs to the TACO1 family.

The protein localises to the cytoplasm. The sequence is that of Probable transcriptional regulatory protein Minf_0651 from Methylacidiphilum infernorum (isolate V4) (Methylokorus infernorum (strain V4)).